Here is a 401-residue protein sequence, read N- to C-terminus: Probable sodium/metabolite cotransporter BASS5, chloroplastic (401 aa).

The N-terminal 46 residues, 1-46 (MAPNAAVLVRPHIAGVHHLPTGRRLPRLAPPQAVSPPFSRQKGSVV), are a transit peptide targeting the chloroplast. 9 helical membrane passes run 93–113 (TIIP…PPSF), 122–142 (APAL…KDFI), 159–179 (FIIK…IFNL), 185–205 (AGIM…ATFL), 215–235 (IVMT…LSYF), 247–267 (GMMS…LLLN), 273–293 (LCSA…ALCV), 299–319 (INIK…LFAF), and 372–392 (LVGV…FALV).

Belongs to the bile acid:sodium symporter (BASS) (TC 2.A.28) family.

The protein resides in the membrane. It localises to the plastid. The protein localises to the chloroplast envelope. In terms of biological role, may function as sodium-coupled metabolite transporter across the chloroplast envelope. The protein is Probable sodium/metabolite cotransporter BASS5, chloroplastic (BASS5) of Oryza sativa subsp. indica (Rice).